The following is a 137-amino-acid chain: Small ribosomal subunit protein uS12 (137 aa).

Positions 1–57 are disordered; it reads MPTINQLIRKGRKSKGSKSNSPALNFGYNSYKKVQTNNSAPQKRGVATRVGTMTPKK. Over residues 32–41 the composition is skewed to polar residues; sequence KKVQTNNSAP. The residue at position 102 (Asp-102) is a 3-methylthioaspartic acid.

The protein belongs to the universal ribosomal protein uS12 family. As to quaternary structure, part of the 30S ribosomal subunit. Contacts proteins S8 and S17. May interact with IF1 in the 30S initiation complex.

In terms of biological role, with S4 and S5 plays an important role in translational accuracy. Functionally, interacts with and stabilizes bases of the 16S rRNA that are involved in tRNA selection in the A site and with the mRNA backbone. Located at the interface of the 30S and 50S subunits, it traverses the body of the 30S subunit contacting proteins on the other side and probably holding the rRNA structure together. The combined cluster of proteins S8, S12 and S17 appears to hold together the shoulder and platform of the 30S subunit. This chain is Small ribosomal subunit protein uS12, found in Ligilactobacillus salivarius (strain UCC118) (Lactobacillus salivarius).